A 383-amino-acid polypeptide reads, in one-letter code: Cysteine protease StiP (383 aa).

Belongs to the cysteine protease StiP family. Post-translationally, is probably processed via an autocatalytic removal of a proregion of about 100 amino acids.

With respect to regulation, is inhibited by bromopyruvate in vitro. Activity is not affected by the presence of tellurite. Functionally, cysteine protease that may play a role in regulating cell morphology in response to stressful conditions which likely cause oxidative damage. Appears to catalyze its own cleavage, which probably leads to its activation. This chain is Cysteine protease StiP (stiP), found in Acinetobacter baylyi (strain ATCC 33305 / BD413 / ADP1).